Consider the following 46-residue polypeptide: Viscotoxin-C1 (46 aa).

3 disulfides stabilise this stretch: cysteine 3–cysteine 40, cysteine 4–cysteine 32, and cysteine 16–cysteine 26.

Monomer.

It localises to the secreted. In terms of biological role, thionins are small plant proteins which are toxic to animal cells. They seem to exert their toxic effect at the level of the cell membrane. Their precise function is not known. The chain is Viscotoxin-C1 from Viscum album (European mistletoe).